The chain runs to 151 residues: Zinc finger HIT domain-containing protein 3 (151 aa).

8 residues coordinate Zn(2+): Cys11, Cys14, Cys22, Cys25, Cys30, Cys34, His38, and Cys42. The HIT-type zinc-finger motif lies at 11 to 42 (CVVCLEKPKYRCPTCRVPYCSVPCFQKHKEQC). Residues 43 to 53 (SSEARPVEKRR) are compositionally biased toward basic and acidic residues. The tract at residues 43–81 (SSEARPVEKRRAGPPVRSEESKDDDSSVADFLNSDEEED) is disordered. Over residues 63-81 (SKDDDSSVADFLNSDEEED) the composition is skewed to acidic residues. Ser76 is subject to Phosphoserine.

As to quaternary structure, thyroid receptor interacting proteins (TRIPs) specifically interact with the ligand binding domain of the thyroid receptor (TR). Requires the presence of thyroid hormone for its interaction. Interacts with NUFIP1. Interacts (via HIT-type zinc finger) with the RUVBL1/RUVBL2 complex in the presence of ADP. Expressed in the cerebellum.

It is found in the cytoplasm. Its subcellular location is the nucleus. The sequence is that of Zinc finger HIT domain-containing protein 3 (Znhit3) from Mus musculus (Mouse).